A 548-amino-acid polypeptide reads, in one-letter code: Eukaryotic translation initiation factor 3 subunit D (548 aa).

Lys-53 is modified (N6-acetyllysine). Ser-161 is subject to Phosphoserine. Residues 285–299 are RNA gate; that stretch reads DFDLLTVSETANEPP. The tract at residues 523–548 is disordered; it reads PDGTFSSDEDEEEEEEEEEEEEEEET. Residues Ser-528 and Ser-529 each carry the phosphoserine modification. A compositionally biased stretch (acidic residues) spans 529–548; that stretch reads SDEDEEEEEEEEEEEEEEET.

It belongs to the eIF-3 subunit D family. Component of the eukaryotic translation initiation factor 3 (eIF-3) complex, which is composed of 13 subunits: EIF3A, EIF3B, EIF3C, EIF3D, EIF3E, EIF3F, EIF3G, EIF3H, EIF3I, EIF3J, EIF3K, EIF3L and EIF3M. The eIF-3 complex appears to include 3 stable modules: module A is composed of EIF3A, EIF3B, EIF3G and EIF3I; module B is composed of EIF3F, EIF3H, and EIF3M; and module C is composed of EIF3C, EIF3D, EIF3E, EIF3K and EIF3L. EIF3C of module C binds EIF3B of module A and EIF3H of module B, thereby linking the three modules. EIF3J is a labile subunit that binds to the eIF-3 complex via EIF3B. The eIF-3 complex interacts with RPS6KB1 under conditions of nutrient depletion. Mitogenic stimulation leads to binding and activation of a complex composed of MTOR and RPTOR, leading to phosphorylation and release of RPS6KB1 and binding of EIF4B to eIF-3. In terms of assembly, (Microbial infection) Interacts with Norwalk virus VPg protein.

The protein localises to the cytoplasm. Functionally, mRNA cap-binding component of the eukaryotic translation initiation factor 3 (eIF-3) complex, a complex required for several steps in the initiation of protein synthesis of a specialized repertoire of mRNAs. The eIF-3 complex associates with the 40S ribosome and facilitates the recruitment of eIF-1, eIF-1A, eIF-2:GTP:methionyl-tRNAi and eIF-5 to form the 43S pre-initiation complex (43S PIC). The eIF-3 complex stimulates mRNA recruitment to the 43S PIC and scanning of the mRNA for AUG recognition. The eIF-3 complex is also required for disassembly and recycling of post-termination ribosomal complexes and subsequently prevents premature joining of the 40S and 60S ribosomal subunits prior to initiation. The eIF-3 complex specifically targets and initiates translation of a subset of mRNAs involved in cell proliferation, including cell cycling, differentiation and apoptosis, and uses different modes of RNA stem-loop binding to exert either translational activation or repression. In the eIF-3 complex, EIF3D specifically recognizes and binds the 7-methylguanosine cap of a subset of mRNAs. (Microbial infection) In case of FCV infection, plays a role in the ribosomal termination-reinitiation event leading to the translation of VP2. In Homo sapiens (Human), this protein is Eukaryotic translation initiation factor 3 subunit D.